We begin with the raw amino-acid sequence, 236 residues long: Predicted GPI-anchored protein 43 (236 aa).

The N-terminal stretch at 1–24 (MHQRNHHSILLTLLLYLQSIVALA) is a signal peptide. Asparagine 192, asparagine 195, and asparagine 198 each carry an N-linked (GlcNAc...) asparagine glycan. The GPI-anchor amidated glycine moiety is linked to residue glycine 208. A propeptide spans 209–236 (SVCLTSSYLNSPIIILCAILTGTLFAMY) (removed in mature form).

It localises to the cell membrane. This Candida albicans (strain SC5314 / ATCC MYA-2876) (Yeast) protein is Predicted GPI-anchored protein 43 (PGA43).